A 339-amino-acid chain; its full sequence is Lymphocyte-specific protein 1 (339 aa).

The disordered stretch occupies residues 1–198; sequence MAEASSDPGA…SPPLSPTTKL (198 aa). The residue at position 24 (Ser-24) is a Phosphoserine. Composition is skewed to basic and acidic residues over residues 32–43 and 51–61; these read VHEQCQHERDRQ and GGGHVPERPKQ. Ser-111 carries the post-translational modification Phosphoserine. Residues 117–140 show a composition bias toward basic and acidic residues; that stretch reads EDRPGLHAYEKEDSDEVHLEELSL. Thr-175 is modified (phosphothreonine). Residues Ser-177, Ser-188, Ser-189, and Ser-193 each carry the phosphoserine modification. A compositionally biased stretch (polar residues) spans 185–196; it reads IEQSSPPLSPTT. Residue Ser-252 is modified to Phosphoserine; by MAPKAPK2. The disordered stretch occupies residues 294 to 315; the sequence is KSLWEQKGGSKTSSTIKSTPSG. Over residues 300–315 the composition is skewed to low complexity; sequence KGGSKTSSTIKSTPSG. N6-acetyllysine is present on Lys-327.

As to quaternary structure, binds actin. Post-translationally, phosphorylated by casein kinase II, protein kinase C and MAPKAPK2. Phosphorylation by PKC induces translocation from membrane to cytoplasm. Phosphorylation by MAPKAPK2 may regulate neutrophil chemotaxis. In terms of tissue distribution, activated T-lymphocytes.

It is found in the cell membrane. Functionally, may play a role in mediating neutrophil activation and chemotaxis. The protein is Lymphocyte-specific protein 1 (LSP1) of Homo sapiens (Human).